A 142-amino-acid chain; its full sequence is Protein-export protein SecB (142 aa).

The protein belongs to the SecB family. Homotetramer, a dimer of dimers. One homotetramer interacts with 1 SecA dimer.

Its subcellular location is the cytoplasm. Its function is as follows. One of the proteins required for the normal export of preproteins out of the cell cytoplasm. It is a molecular chaperone that binds to a subset of precursor proteins, maintaining them in a translocation-competent state. It also specifically binds to its receptor SecA. In Buchnera aphidicola subsp. Acyrthosiphon pisum (strain 5A), this protein is Protein-export protein SecB.